We begin with the raw amino-acid sequence, 129 residues long: Small ribosomal subunit protein uS11 (129 aa).

Belongs to the universal ribosomal protein uS11 family. As to quaternary structure, part of the 30S ribosomal subunit. Interacts with proteins S7 and S18. Binds to IF-3.

Its function is as follows. Located on the platform of the 30S subunit, it bridges several disparate RNA helices of the 16S rRNA. Forms part of the Shine-Dalgarno cleft in the 70S ribosome. The sequence is that of Small ribosomal subunit protein uS11 from Nitratidesulfovibrio vulgaris (strain ATCC 29579 / DSM 644 / CCUG 34227 / NCIMB 8303 / VKM B-1760 / Hildenborough) (Desulfovibrio vulgaris).